We begin with the raw amino-acid sequence, 203 residues long: Pyridoxine/pyridoxamine 5'-phosphate oxidase (203 aa).

Residues 50–55, 65–66, Lys-72, and Gln-94 each bind FMN; these read RMVLLK and YT. Lys-55 provides a ligand contact to substrate. Tyr-112, Arg-116, and Ser-120 together coordinate substrate. FMN-binding positions include 129–130 and Trp-174; that span reads QS. 180–182 serves as a coordination point for substrate; it reads RLH. Position 184 (Arg-184) interacts with FMN.

Belongs to the pyridoxamine 5'-phosphate oxidase family. In terms of assembly, homodimer. The cofactor is FMN.

The enzyme catalyses pyridoxamine 5'-phosphate + O2 + H2O = pyridoxal 5'-phosphate + H2O2 + NH4(+). The catalysed reaction is pyridoxine 5'-phosphate + O2 = pyridoxal 5'-phosphate + H2O2. It functions in the pathway cofactor metabolism; pyridoxal 5'-phosphate salvage; pyridoxal 5'-phosphate from pyridoxamine 5'-phosphate: step 1/1. Its pathway is cofactor metabolism; pyridoxal 5'-phosphate salvage; pyridoxal 5'-phosphate from pyridoxine 5'-phosphate: step 1/1. In terms of biological role, catalyzes the oxidation of either pyridoxine 5'-phosphate (PNP) or pyridoxamine 5'-phosphate (PMP) into pyridoxal 5'-phosphate (PLP). The chain is Pyridoxine/pyridoxamine 5'-phosphate oxidase from Brucella anthropi (strain ATCC 49188 / DSM 6882 / CCUG 24695 / JCM 21032 / LMG 3331 / NBRC 15819 / NCTC 12168 / Alc 37) (Ochrobactrum anthropi).